We begin with the raw amino-acid sequence, 101 residues long: Small ribosomal subunit protein uS14A (101 aa).

It belongs to the universal ribosomal protein uS14 family. As to quaternary structure, part of the 30S ribosomal subunit. Contacts proteins S3 and S10.

Binds 16S rRNA, required for the assembly of 30S particles and may also be responsible for determining the conformation of the 16S rRNA at the A site. This Salinispora tropica (strain ATCC BAA-916 / DSM 44818 / JCM 13857 / NBRC 105044 / CNB-440) protein is Small ribosomal subunit protein uS14A.